Consider the following 351-residue polypeptide: Peptide chain release factor 1 (351 aa).

N5-methylglutamine is present on Gln-229.

This sequence belongs to the prokaryotic/mitochondrial release factor family. Methylated by PrmC. Methylation increases the termination efficiency of RF1.

It localises to the cytoplasm. In terms of biological role, peptide chain release factor 1 directs the termination of translation in response to the peptide chain termination codons UAG and UAA. This is Peptide chain release factor 1 from Cereibacter sphaeroides (strain KD131 / KCTC 12085) (Rhodobacter sphaeroides).